The primary structure comprises 88 residues: Small ribosomal subunit protein uS17 (88 aa).

The protein belongs to the universal ribosomal protein uS17 family. As to quaternary structure, part of the 30S ribosomal subunit.

In terms of biological role, one of the primary rRNA binding proteins, it binds specifically to the 5'-end of 16S ribosomal RNA. The chain is Small ribosomal subunit protein uS17 from Prochlorococcus marinus (strain MIT 9515).